An 839-amino-acid polypeptide reads, in one-letter code: Glycerol-3-phosphate acyltransferase (839 aa).

Residues 309–314 (CHRSHI) carry the HXXXXD motif motif.

It belongs to the GPAT/DAPAT family.

Its subcellular location is the cell inner membrane. It carries out the reaction sn-glycerol 3-phosphate + an acyl-CoA = a 1-acyl-sn-glycero-3-phosphate + CoA. Its pathway is phospholipid metabolism; CDP-diacylglycerol biosynthesis; CDP-diacylglycerol from sn-glycerol 3-phosphate: step 1/3. This is Glycerol-3-phosphate acyltransferase from Pseudomonas fluorescens (strain SBW25).